Here is a 490-residue protein sequence, read N- to C-terminus: Transcriptional regulator FleQ (490 aa).

Leu142 lines the 3',3'-c-di-GMP pocket. ADP contacts are provided by residues Val147 and 177–182 (GTGKEV). Residues 186-189 (NLHY) and 330-341 (ELISRMEHEKRG) contribute to the 3',3'-c-di-GMP site. ADP is bound by residues Arg334 and Arg363.

As to quaternary structure, forms homodimers. Forms homohexamers that inhibit transcription initiation. Interacts with FleN; this complex is formed in the presence as well as in the absence of c-di-GMP or ATP.

With respect to regulation, C-di-GMP interaction leads to active site obstruction, hexameric ring destabilization thus relieving DNA bending and activating gene transcription. In terms of biological role, AAA+ ATPase enhancer-binding protein that acts as a transcription regulator and plays a role in the modulation of mucin adhesion and flagellar gene expression. In addition to flagella genes, also regulates expression of biofilm-related genes. Functions as a transcriptional repressor in the absence of c-di-GMP and as an activator when c-di-GMP is present. The sequence is that of Transcriptional regulator FleQ from Pseudomonas aeruginosa (strain ATCC 15692 / DSM 22644 / CIP 104116 / JCM 14847 / LMG 12228 / 1C / PRS 101 / PAO1).